A 198-amino-acid chain; its full sequence is DnaJ homolog subfamily C member 12 (198 aa).

The residue at position 1 (methionine 1) is an N-acetylmethionine. The J domain occupies 14–79; sequence DYYTLLGCDE…ESRARYDHWR (66 aa). Residues 114–156 are compositionally biased toward basic and acidic residues; that stretch reads EESDKTHTTKMENEECNEQRERKKEELASTAEKTEQKEPKPLE. Positions 114–169 are disordered; sequence EESDKTHTTKMENEECNEQRERKKEELASTAEKTEQKEPKPLEKSVSPQNSDSSGF. Residues serine 160, serine 166, and serine 182 each carry the phosphoserine modification.

Interacts with HSPA8. Interacts with TPH1. Interacts with TPH2. As to expression, expressed at high levels in brain, heart, and testis, and at reduced levels in kidney and stomach.

Its subcellular location is the cytoplasm. Probable co-chaperone that participates in the proper folding of biopterin-dependent aromatic amino acid hydroxylases, which include phenylalanine-4-hydroxylase (PAH), tyrosine 3-monooxygenase (TH) and peripheral and neuronal tryptophan hydroxylases (TPH1 and TPH2). In Homo sapiens (Human), this protein is DnaJ homolog subfamily C member 12 (DNAJC12).